The primary structure comprises 72 residues: Beta-defensin 104A (72 aa).

The first 22 residues, 1 to 22 (MRRLVLLLAISLLLYQDLPVRS), serve as a signal peptide directing secretion. 3 disulfide bridges follow: cysteine 30-cysteine 57, cysteine 37-cysteine 51, and cysteine 41-cysteine 58.

It belongs to the beta-defensin family.

Its subcellular location is the secreted. In terms of biological role, has antimicrobial activity. This Pongo pygmaeus (Bornean orangutan) protein is Beta-defensin 104A (DEFB104A).